Consider the following 282-residue polypeptide: 4-hydroxy-3-methylbut-2-enyl diphosphate reductase (282 aa).

Cys12 contacts [4Fe-4S] cluster. His40 and His72 together coordinate (2E)-4-hydroxy-3-methylbut-2-enyl diphosphate. The dimethylallyl diphosphate site is built by His40 and His72. Residues His40 and His72 each coordinate isopentenyl diphosphate. Cys94 provides a ligand contact to [4Fe-4S] cluster. His122 serves as a coordination point for (2E)-4-hydroxy-3-methylbut-2-enyl diphosphate. His122 is a dimethylallyl diphosphate binding site. An isopentenyl diphosphate-binding site is contributed by His122. The Proton donor role is filled by Glu124. A (2E)-4-hydroxy-3-methylbut-2-enyl diphosphate-binding site is contributed by Thr160. Cys188 lines the [4Fe-4S] cluster pocket. (2E)-4-hydroxy-3-methylbut-2-enyl diphosphate is bound by residues Ser216, Asn218, and Ser260. 3 residues coordinate dimethylallyl diphosphate: Ser216, Asn218, and Ser260. Isopentenyl diphosphate is bound by residues Ser216, Asn218, and Ser260.

Belongs to the IspH family. Requires [4Fe-4S] cluster as cofactor.

The catalysed reaction is isopentenyl diphosphate + 2 oxidized [2Fe-2S]-[ferredoxin] + H2O = (2E)-4-hydroxy-3-methylbut-2-enyl diphosphate + 2 reduced [2Fe-2S]-[ferredoxin] + 2 H(+). The enzyme catalyses dimethylallyl diphosphate + 2 oxidized [2Fe-2S]-[ferredoxin] + H2O = (2E)-4-hydroxy-3-methylbut-2-enyl diphosphate + 2 reduced [2Fe-2S]-[ferredoxin] + 2 H(+). It functions in the pathway isoprenoid biosynthesis; dimethylallyl diphosphate biosynthesis; dimethylallyl diphosphate from (2E)-4-hydroxy-3-methylbutenyl diphosphate: step 1/1. The protein operates within isoprenoid biosynthesis; isopentenyl diphosphate biosynthesis via DXP pathway; isopentenyl diphosphate from 1-deoxy-D-xylulose 5-phosphate: step 6/6. Functionally, catalyzes the conversion of 1-hydroxy-2-methyl-2-(E)-butenyl 4-diphosphate (HMBPP) into a mixture of isopentenyl diphosphate (IPP) and dimethylallyl diphosphate (DMAPP). Acts in the terminal step of the DOXP/MEP pathway for isoprenoid precursor biosynthesis. In Geobacter metallireducens (strain ATCC 53774 / DSM 7210 / GS-15), this protein is 4-hydroxy-3-methylbut-2-enyl diphosphate reductase.